The sequence spans 363 residues: Caffeic acid 3-O-methyltransferase (363 aa).

Residue Met130 to Leu136 participates in substrate binding. The substrate binding stretch occupies residues Ala162–Met180. Residues Gly208, Asp231, Asp251, Met252, and Lys265 each coordinate S-adenosyl-L-methionine. His269 acts as the Proton acceptor in catalysis.

This sequence belongs to the class I-like SAM-binding methyltransferase superfamily. Cation-independent O-methyltransferase family. COMT subfamily. As to quaternary structure, homodimer.

The enzyme catalyses (E)-caffeate + S-adenosyl-L-methionine = (E)-ferulate + S-adenosyl-L-homocysteine + H(+). The protein operates within aromatic compound metabolism; phenylpropanoid biosynthesis. In terms of biological role, catalyzes the conversion of caffeic acid to ferulic acid and of 5-hydroxyferulic acid to sinapic acid. The resulting products may subsequently be converted to the corresponding alcohols that are incorporated into lignins. The polypeptide is Caffeic acid 3-O-methyltransferase (COMT1) (Catharanthus roseus (Madagascar periwinkle)).